A 296-amino-acid polypeptide reads, in one-letter code: Glycine--tRNA ligase alpha subunit (296 aa).

This sequence belongs to the class-II aminoacyl-tRNA synthetase family. Tetramer of two alpha and two beta subunits.

The protein localises to the cytoplasm. The enzyme catalyses tRNA(Gly) + glycine + ATP = glycyl-tRNA(Gly) + AMP + diphosphate. The chain is Glycine--tRNA ligase alpha subunit from Francisella philomiragia subsp. philomiragia (strain ATCC 25017 / CCUG 19701 / FSC 153 / O#319-036).